The following is a 612-amino-acid chain: Dihydroxy-acid dehydratase (612 aa).

Residue Asp-81 coordinates Mg(2+). Cys-122 serves as a coordination point for [2Fe-2S] cluster. Residues Asp-123 and Lys-124 each coordinate Mg(2+). At Lys-124 the chain carries N6-carboxylysine. Residue Cys-193 participates in [2Fe-2S] cluster binding. Mg(2+) is bound at residue Glu-489. Ser-515 serves as the catalytic Proton acceptor.

Belongs to the IlvD/Edd family. As to quaternary structure, homodimer. [2Fe-2S] cluster serves as cofactor. Requires Mg(2+) as cofactor.

The catalysed reaction is (2R)-2,3-dihydroxy-3-methylbutanoate = 3-methyl-2-oxobutanoate + H2O. The enzyme catalyses (2R,3R)-2,3-dihydroxy-3-methylpentanoate = (S)-3-methyl-2-oxopentanoate + H2O. The protein operates within amino-acid biosynthesis; L-isoleucine biosynthesis; L-isoleucine from 2-oxobutanoate: step 3/4. It participates in amino-acid biosynthesis; L-valine biosynthesis; L-valine from pyruvate: step 3/4. Functions in the biosynthesis of branched-chain amino acids. Catalyzes the dehydration of (2R,3R)-2,3-dihydroxy-3-methylpentanoate (2,3-dihydroxy-3-methylvalerate) into 2-oxo-3-methylpentanoate (2-oxo-3-methylvalerate) and of (2R)-2,3-dihydroxy-3-methylbutanoate (2,3-dihydroxyisovalerate) into 2-oxo-3-methylbutanoate (2-oxoisovalerate), the penultimate precursor to L-isoleucine and L-valine, respectively. The protein is Dihydroxy-acid dehydratase of Xanthomonas euvesicatoria pv. vesicatoria (strain 85-10) (Xanthomonas campestris pv. vesicatoria).